A 238-amino-acid polypeptide reads, in one-letter code: 7-carboxy-7-deazaguanine synthase (238 aa).

Substrate is bound by residues 14–16 (IQG) and Arg29. In terms of domain architecture, Radical SAM core spans 20-234 (VVGQKTMFIR…PQLHALVWGN (215 aa)). [4Fe-4S] cluster-binding residues include Cys33, Cys37, and Cys40. Ser42 serves as a coordination point for Mg(2+). A substrate-binding site is contributed by Ser80. S-adenosyl-L-methionine is bound by residues Gly82 and 126-128 (SPK).

The protein belongs to the radical SAM superfamily. 7-carboxy-7-deazaguanine synthase family. In terms of assembly, homodimer. It depends on [4Fe-4S] cluster as a cofactor. Requires S-adenosyl-L-methionine as cofactor. Mg(2+) is required as a cofactor.

The enzyme catalyses 6-carboxy-5,6,7,8-tetrahydropterin + H(+) = 7-carboxy-7-deazaguanine + NH4(+). It functions in the pathway purine metabolism; 7-cyano-7-deazaguanine biosynthesis. Its function is as follows. Catalyzes the complex heterocyclic radical-mediated conversion of 6-carboxy-5,6,7,8-tetrahydropterin (CPH4) to 7-carboxy-7-deazaguanine (CDG), a step common to the biosynthetic pathways of all 7-deazapurine-containing compounds. The polypeptide is 7-carboxy-7-deazaguanine synthase (Bacillus cereus (strain ATCC 14579 / DSM 31 / CCUG 7414 / JCM 2152 / NBRC 15305 / NCIMB 9373 / NCTC 2599 / NRRL B-3711)).